A 49-amino-acid chain; its full sequence is MRVKITLACTETGDRNYITTKNKRTNPDRLELKKYSPRLKKYTLHRETK.

Belongs to the bacterial ribosomal protein bL33 family.

The sequence is that of Large ribosomal subunit protein bL33C from Bacillus pumilus (strain SAFR-032).